Consider the following 342-residue polypeptide: Phosphate acyltransferase (342 aa).

The protein belongs to the PlsX family. In terms of assembly, homodimer. Probably interacts with PlsY.

Its subcellular location is the cytoplasm. It carries out the reaction a fatty acyl-[ACP] + phosphate = an acyl phosphate + holo-[ACP]. It participates in lipid metabolism; phospholipid metabolism. Catalyzes the reversible formation of acyl-phosphate (acyl-PO(4)) from acyl-[acyl-carrier-protein] (acyl-ACP). This enzyme utilizes acyl-ACP as fatty acyl donor, but not acyl-CoA. This Shewanella pealeana (strain ATCC 700345 / ANG-SQ1) protein is Phosphate acyltransferase.